Here is a 276-residue protein sequence, read N- to C-terminus: Sulfur carrier protein FdhD (276 aa).

Residue Cys120 is the Cysteine persulfide intermediate of the active site.

The protein belongs to the FdhD family.

It is found in the cytoplasm. In terms of biological role, required for formate dehydrogenase (FDH) activity. Acts as a sulfur carrier protein that transfers sulfur from IscS to the molybdenum cofactor prior to its insertion into FDH. This is Sulfur carrier protein FdhD from Bordetella parapertussis (strain 12822 / ATCC BAA-587 / NCTC 13253).